Consider the following 174-residue polypeptide: Myosin regulatory light chain sqh (174 aa).

Position 21 is a phosphothreonine (T21). S22 carries the post-translational modification Phosphoserine. EF-hand domains follow at residues 31 to 66 and 100 to 135; these read AQIA…LGKN and DPED…MGDR. Ca(2+) contacts are provided by D44, N46, D48, and D55.

As to quaternary structure, myosin is a hexamer of 2 heavy chains and 4 light chains. In terms of processing, phosphorylation plays a central role in myosin regulation.

Functionally, required for cytokinesis, could regulate contractile ring function. This chain is Myosin regulatory light chain sqh (sqh), found in Drosophila melanogaster (Fruit fly).